The following is a 186-amino-acid chain: ATP synthase subunit delta (186 aa).

Belongs to the ATPase delta chain family. F-type ATPases have 2 components, F(1) - the catalytic core - and F(0) - the membrane proton channel. F(1) has five subunits: alpha(3), beta(3), gamma(1), delta(1), epsilon(1). F(0) has three main subunits: a(1), b(2) and c(10-14). The alpha and beta chains form an alternating ring which encloses part of the gamma chain. F(1) is attached to F(0) by a central stalk formed by the gamma and epsilon chains, while a peripheral stalk is formed by the delta and b chains.

It localises to the cell membrane. Its function is as follows. F(1)F(0) ATP synthase produces ATP from ADP in the presence of a proton or sodium gradient. F-type ATPases consist of two structural domains, F(1) containing the extramembraneous catalytic core and F(0) containing the membrane proton channel, linked together by a central stalk and a peripheral stalk. During catalysis, ATP synthesis in the catalytic domain of F(1) is coupled via a rotary mechanism of the central stalk subunits to proton translocation. Functionally, this protein is part of the stalk that links CF(0) to CF(1). It either transmits conformational changes from CF(0) to CF(1) or is implicated in proton conduction. The chain is ATP synthase subunit delta from Wolbachia pipientis wMel.